Reading from the N-terminus, the 658-residue chain is UvrABC system protein B (658 aa).

A Helicase ATP-binding domain is found at Lys-25–Arg-416. Gly-38 to Thr-45 serves as a coordination point for ATP. The Beta-hairpin motif lies at His-91–Ile-114. Residues Gln-433–Lys-607 form the Helicase C-terminal domain. The 36-residue stretch at Glu-623–Leu-658 folds into the UVR domain.

The protein belongs to the UvrB family. Forms a heterotetramer with UvrA during the search for lesions. Interacts with UvrC in an incision complex.

Its subcellular location is the cytoplasm. The UvrABC repair system catalyzes the recognition and processing of DNA lesions. A damage recognition complex composed of 2 UvrA and 2 UvrB subunits scans DNA for abnormalities. Upon binding of the UvrA(2)B(2) complex to a putative damaged site, the DNA wraps around one UvrB monomer. DNA wrap is dependent on ATP binding by UvrB and probably causes local melting of the DNA helix, facilitating insertion of UvrB beta-hairpin between the DNA strands. Then UvrB probes one DNA strand for the presence of a lesion. If a lesion is found the UvrA subunits dissociate and the UvrB-DNA preincision complex is formed. This complex is subsequently bound by UvrC and the second UvrB is released. If no lesion is found, the DNA wraps around the other UvrB subunit that will check the other stand for damage. In Helicobacter pylori (strain J99 / ATCC 700824) (Campylobacter pylori J99), this protein is UvrABC system protein B.